The chain runs to 328 residues: Malate dehydrogenase (328 aa).

Position 11 to 17 (11 to 17) interacts with NAD(+); it reads GAAGQIG. Positions 92 and 98 each coordinate substrate. NAD(+) contacts are provided by residues Asn-105, Gln-112, and 129-131; that span reads VGN. Asn-131 and Arg-162 together coordinate substrate. His-187 serves as the catalytic Proton acceptor.

Belongs to the LDH/MDH superfamily. MDH type 2 family.

The enzyme catalyses (S)-malate + NAD(+) = oxaloacetate + NADH + H(+). In terms of biological role, catalyzes the reversible oxidation of malate to oxaloacetate. This chain is Malate dehydrogenase, found in Coxiella burnetii (strain RSA 493 / Nine Mile phase I).